We begin with the raw amino-acid sequence, 381 residues long: Beta-lactamase (381 aa).

An N-terminal signal peptide occupies residues 1–20 (MMKKSICCALLLTASFSTFA). The active-site Acyl-ester intermediate is Ser-84. Tyr-170 functions as the Proton acceptor in the catalytic mechanism. 335 to 337 (KTG) lines the substrate pocket.

The protein belongs to the class-C beta-lactamase family.

The protein resides in the periplasm. The enzyme catalyses a beta-lactam + H2O = a substituted beta-amino acid. Its activity is regulated as follows. Sulbactam is an effective progressive inhibitor but a poor competitive inhibitor. Functionally, this protein is a serine beta-lactamase with a substrate specificity for cephalosporins. The chain is Beta-lactamase (ampC) from Citrobacter freundii.